Reading from the N-terminus, the 288-residue chain is tRNA pseudouridine synthase B (288 aa).

Asp38 acts as the Nucleophile in catalysis.

It belongs to the pseudouridine synthase TruB family. Type 1 subfamily.

The catalysed reaction is uridine(55) in tRNA = pseudouridine(55) in tRNA. Functionally, responsible for synthesis of pseudouridine from uracil-55 in the psi GC loop of transfer RNAs. This Carboxydothermus hydrogenoformans (strain ATCC BAA-161 / DSM 6008 / Z-2901) protein is tRNA pseudouridine synthase B.